Here is a 606-residue protein sequence, read N- to C-terminus: WD repeat-containing protein 1 (606 aa).

13 WD repeats span residues 4–45, 48–87, 93–135, 138–176, 180–218, 224–263, 270–306, 311–351, 358–408, 432–474, 480–518, 523–561, and 566–604; these read EIKK…LRNI, PAIA…IWDT, LLKY…LWDS, SVGE…FFEG, KFKF…IYDG, VCAL…IWDV, NTFT…YLDK, KPLR…YWDS, SFAG…KLDV, LKDQ…LYSI, KDEG…VFSV, SENN…VWTL, and TRVK…EWTI. N6-acetyllysine occurs at positions 28, 81, 95, and 115. Tyr238 carries the post-translational modification Phosphotyrosine. Residue Lys480 is modified to N6-acetyllysine.

This sequence belongs to the WD repeat AIP1 family.

Its subcellular location is the cytoplasm. The protein resides in the cytoskeleton. It is found in the cell projection. It localises to the podosome. In terms of biological role, induces disassembly of actin filaments in conjunction with ADF/cofilin family proteins. Enhances cofilin-mediated actin severing. Involved in cytokinesis. Involved in chemotactic cell migration by restricting lamellipodial membrane protrusions. Involved in myocardium sarcomere organization. Required for cardiomyocyte growth and maintenance. Involved in megakaryocyte maturation and platelet shedding. Required for the establishment of planar cell polarity (PCP) during follicular epithelium development and for cell shape changes during PCP; the function seems to implicate cooperation with CFL1 and/or DSTN/ADF. Involved in the generation/maintenance of cortical tension. Involved in assembly and maintenance of epithelial apical cell junctions and plays a role in the organization of the perijunctional actomyosin belt. This Bos taurus (Bovine) protein is WD repeat-containing protein 1 (WDR1).